Consider the following 138-residue polypeptide: 16 kDa phloem protein 2 (138 aa).

The C2 domain maps to 1-108 (MGMGMMEVHL…LAEGVRKGWS (108 aa)). Ca(2+)-binding residues include D20, D27, D78, D80, and D86.

It depends on Ca(2+) as a cofactor. Sieve elements of leaves, stems, roots and flowers.

Binds to both sense and antisense RNA. Interacts with mesophyll plasmodesmata to mediate its own cell-to-cell transport and potentiate RNA trafficking. This chain is 16 kDa phloem protein 2 (PP16-2), found in Cucurbita maxima (Pumpkin).